A 2255-amino-acid polypeptide reads, in one-letter code: MNKLSMGVFRCSSVSEILKYIRAITSHRAPIKYGVEKVEGKSYDRLRREANQKAIDLLNSLVDGATLTDEQRQILAGYTGEGGIGGSVSEYYTPKPIAEGVWEIMKLYGADVGNTLEPSAGTGVFNETKPVGTVMTATEISSVSGRINQLLHPEDSVQISPFEQLAVSTPNDSFDHVVGNVPFGGRDNTRNIDKPYAEETDMGSYFMLRMLDKIKPGGFMCVIVPPSIVSGSNMKRLRLRLSRKAEFLGAHRLPTGTFDANGTSTVVDVVLMRKHPAEMAEKIPLVHESTLESANVLWPTFISGKWFEKDGRRFVHGTQEKGFQGRIEVRADGQIDNQALKAKLIHCFESRIDWYLLDMAEPSPTADVVDEGEMRLINGVWQKYAGGRWIESDAGKELKIDVASYGADSWEALQRNLTTTEGRLGMTFTQMANVRDKYTTSISDDMVQLVDWINSQPEKYRERLYRGAMIGRMLIEYQDMKAAGHSAEQIEQQRLSLVSRLQAEIDRFGNPGRGPIAKLSGSGARAWFAFRGAIKLDGTISDELTGKLVTHDSSASYDSTSYQDTLRYLYSDLTRDPIQLDDFRLAFTGELPASDDELLNLLASTPGIAVSPYGGIVPFARATSGDINEIVAPKQEFLATLTDGPVKNNVLNQLAAIEEKRIKTPAENIRFKLNSRWFDRSVILEFLQENGYPDLRYVQSVQLEGDEMVSDTYHGGDGLFVGHRYGVVQRKDKETGEIRYEWDRKSGENATGFPAQLEKYLNGARIGGKDSATANGYREQMALLEDQFNKWIKTHDRYDELVAKYNDVFNSNIPYEHSGDPLGLKGLSGKRQPFDYQNSEVRRLSEDGRGILGFGTGLGKTTTALALEAFNYENGRSTRTAYVVPKSVLENWYYEAKEFLSEEAFSNYLFVGLDVLMDGDQIRQVPVLDENGKPVLGTDGTPVMRDALKLADEATITARMNAIPHSNYRAVVFTKEQYARIPLRDDTVDEHAQDMLYDFVAAGRVASAMDSDSHRKEAARRRVLSEYSDTGTEKAEKYPYFEDMGFDSVIADEGHNYRNSYKNGREASQLAYLPTSAVAQSARDMAIKNAYLMKKNGGRGPVLLTATPVVNTPIDAYNMLSHVLPKEYWQKMGIYGPDDFVKFFGKTRLETVQKISGEVEEKMALVGFENLDALRGIFHRWTTLKTAEDVKDTVEIPELDEHQQDAPLTEEQLAAYEELRQQAEAAAKANNGVTTSVNEDGVIEHEKARPIFSIIRDMDRVCTDMDLYYRRITYRFLPEYADAVQQLADSLPKQATSEDDDSDDSITQQSQYSLIDKGEFIQLQVPEAFEQEVNKRLARFGIDEQTVTHPVTPKYAKLIATLKEFFPEGKQIIFTDEKTQHQKLKRIICNALNLEPSKVGILNAQTVAEAGKTGKKLKAVKPPKELPDEPTDAQIAKYNEQMALYDAYIAQQNEMSLGGLEKIAADFQEGRTPIIICNKKAEVGINLHRGTTDIHHLTLPWTPASIAQRNGRGARVGSNRASVRVHYYCGKGSFDEYRLKTLKRKAGWISDILRSDKSEMENADANDMIEMQMYTAKDDGERLAMMQVQMDKAKAAQRARQKEQATIDLQNYIKAQHAAGEDVEVLTAELERSKAELEKTTAEVAKFKQAVMAKAADNADWKARWGSVHHTDRMLLAQYRASLKSAIQRKANISQAISPYEKLLNRTQKAATDIKRLRPLVEDAINKGILDVDPDLVNHASEFLVIGDRSWRVGQYYDCAGDIVRIKSLDFDSQRADVEIIFTFKGTKSGNWDVKTLDKQVDVTPDEDAVMQKISGGVSIAGINDIISCDDFYRFQQRGMIKITDSYGVQTTESGYSIDFVGTYTDPLKHAVYPDRRDGALKSSIAKWVLGMMSEGNNRQVRLAEVFLTELFGSNYGDVIASYGDTLSPEAIQEKIADAIARMPEKTSQGATRNGDSELEVTNAIFGTHEFRASDYEITTAQFGTIGIYSNKAEIKQAMDAASARIAAEREANLNHAVAALTQSWVTAIREAATTGKITPAIADVVNDGSKFMDAYKMDAVQLPSAYGQLSYRMTYNLVSMFSDLAILGLVDLNEVTPELLSMRKNHVEILQRINTVLAGRTDEEKQADADRINLALGNITEEEIAARNEKQEELSSIQGDATSIAQSLGLNYRVSTADLKMMYAPKFAAGEVFGLQEASGMKGVLFRAKDAIKTKFGARWLPAKAKNSDFPGNWWIIETKHNVADVLAVIQQYA.

A Helicase ATP-binding domain is found at 841–1126 (VRRLSEDGRG…YNMLSHVLPK (286 aa)). ATP is bound at residue 854 to 861 (FGTGLGKT). The short motif at 1052-1055 (DEGH) is the DEAH box element. Residues 1198 to 1234 (ELDEHQQDAPLTEEQLAAYEELRQQAEAAAKANNGVT) are a coiled coil. The 186-residue stretch at 1383-1568 (KLKRIICNAL…EMENADANDM (186 aa)) folds into the Helicase C-terminal domain. A coiled-coil region spans residues 1617 to 1654 (HAAGEDVEVLTAELERSKAELEKTTAEVAKFKQAVMAK).

Belongs to the helicase family.

Its subcellular location is the virion. In terms of biological role, capsid internal protein that is probably ejected along with the viral DNA and prevents degradation of viral DNA by the host EcoB and EcoK restriction-modification antiviral defense systems. This chain is Defense against restriction protein B, found in Escherichia phage P1 (Bacteriophage P1).